Reading from the N-terminus, the 106-residue chain is Urease subunit beta (106 aa).

It belongs to the urease beta subunit family. In terms of assembly, heterotrimer of UreA (gamma), UreB (beta) and UreC (alpha) subunits. Three heterotrimers associate to form the active enzyme.

It is found in the cytoplasm. It carries out the reaction urea + 2 H2O + H(+) = hydrogencarbonate + 2 NH4(+). It participates in nitrogen metabolism; urea degradation; CO(2) and NH(3) from urea (urease route): step 1/1. This Prochlorococcus marinus (strain AS9601) protein is Urease subunit beta.